A 394-amino-acid chain; its full sequence is Elongation factor Tu (394 aa).

The tr-type G domain maps to 10-204; it reads KPHVNVGTIG…ALDTYIPEPE (195 aa). Residues 19-26 are G1; it reads GHVDHGKT. 19 to 26 serves as a coordination point for GTP; the sequence is GHVDHGKT. Thr26 lines the Mg(2+) pocket. The tract at residues 60 to 64 is G2; it reads GITIN. Positions 81-84 are G3; that stretch reads DCPG. GTP-binding positions include 81–85 and 136–139; these read DCPGH and NKCD. Residues 136–139 are G4; it reads NKCD. The segment at 174–176 is G5; the sequence is SAL.

This sequence belongs to the TRAFAC class translation factor GTPase superfamily. Classic translation factor GTPase family. EF-Tu/EF-1A subfamily. Monomer.

It localises to the cytoplasm. It carries out the reaction GTP + H2O = GDP + phosphate + H(+). In terms of biological role, GTP hydrolase that promotes the GTP-dependent binding of aminoacyl-tRNA to the A-site of ribosomes during protein biosynthesis. This chain is Elongation factor Tu, found in Shewanella halifaxensis (strain HAW-EB4).